Reading from the N-terminus, the 636-residue chain is 1-deoxy-D-xylulose-5-phosphate synthase (636 aa).

Thiamine diphosphate-binding positions include histidine 74 and 115–117 (GHA). Aspartate 146 is a binding site for Mg(2+). Residues 147-148 (GA), asparagine 175, tyrosine 285, and glutamate 368 each bind thiamine diphosphate. Asparagine 175 is a Mg(2+) binding site.

This sequence belongs to the transketolase family. DXPS subfamily. As to quaternary structure, homodimer. Mg(2+) serves as cofactor. Requires thiamine diphosphate as cofactor.

It catalyses the reaction D-glyceraldehyde 3-phosphate + pyruvate + H(+) = 1-deoxy-D-xylulose 5-phosphate + CO2. It functions in the pathway metabolic intermediate biosynthesis; 1-deoxy-D-xylulose 5-phosphate biosynthesis; 1-deoxy-D-xylulose 5-phosphate from D-glyceraldehyde 3-phosphate and pyruvate: step 1/1. Functionally, catalyzes the acyloin condensation reaction between C atoms 2 and 3 of pyruvate and glyceraldehyde 3-phosphate to yield 1-deoxy-D-xylulose-5-phosphate (DXP). The sequence is that of 1-deoxy-D-xylulose-5-phosphate synthase from Anaeromyxobacter dehalogenans (strain 2CP-1 / ATCC BAA-258).